The chain runs to 1228 residues: Reverse gyrase (1228 aa).

The RG N-terminal-type zinc finger occupies 1–41 (MEVPLVAYLHSCPNCGGPITSDRLASGLPCRECLPDGAKAG). Zn(2+) contacts are provided by Cys-12, Cys-15, Cys-30, and Cys-33. ATP contacts are provided by residues Gln-88 and 105-112 (APTGSGKT). Positions 92–255 (ARRFVRGKSF…NLTKQLRKAE (164 aa)) constitute a Helicase ATP-binding domain. The DEAD box motif lies at 211–214 (DDVD). The segment at 631-1228 (DLMRTILMVV…RKEVLPHLAS (598 aa)) is topoisomerase I. Residues 635 to 809 (TILMVVESPT…DIRRVEFHEV (175 aa)) enclose the Toprim domain. Positions 641 and 778 each coordinate Mg(2+). In terms of domain architecture, Topo IA-type catalytic spans 825–1223 (NFSLVKAQIV…LYDEFRKEVL (399 aa)). Tyr-967 acts as the O-(5'-phospho-DNA)-tyrosine intermediate in catalysis.

In the N-terminal section; belongs to the DEAD box helicase family. DDVD subfamily. It in the C-terminal section; belongs to the type IA topoisomerase family. As to quaternary structure, monomer. It depends on Zn(2+) as a cofactor. Requires Mg(2+) as cofactor.

The protein localises to the cytoplasm. The catalysed reaction is ATP + H2O = ADP + phosphate + H(+). Modifies the topological state of DNA by introducing positive supercoils in an ATP-dependent process, increasing the linking number in steps of +1. Binds to single-stranded DNA, transiently cleaves and then rejoins the ends, introducing a positive supercoil in the process. The scissile phosphodiester is attacked by the catalytic tyrosine of the enzyme, resulting in the formation of a DNA-(5'-phosphotyrosyl)-enzyme intermediate. Probably involved in rewinding DNA strands in regions of the chromosome that have opened up to allow replication, transcription, DNA repair and/or for DNA protection. In Pyrobaculum aerophilum (strain ATCC 51768 / DSM 7523 / JCM 9630 / CIP 104966 / NBRC 100827 / IM2), this protein is Reverse gyrase.